An 870-amino-acid polypeptide reads, in one-letter code: DNA polymerase kappa (870 aa).

Residues Ile-103–Gly-358 form the UmuC domain. Positions 107, 198, and 199 each coordinate Mg(2+). UBZ4-type zinc fingers lie at residues Ile-621 to Ser-651 and Ala-776 to Phe-806. Zn(2+) contacts are provided by Cys-624, Cys-627, His-642, Cys-646, Cys-779, Cys-782, His-797, and Cys-801. Residues Asn-816–Pro-858 are disordered.

The protein belongs to the DNA polymerase type-Y family. In terms of assembly, interacts with REV1. Interacts with PCNA. It depends on Mg(2+) as a cofactor. Requires Mn(2+) as cofactor. Detected at low levels in testis, spleen, prostate and ovary. Detected at very low levels in kidney, colon, brain, heart, liver, lung, placenta, pancreas and peripheral blood leukocytes.

It localises to the nucleus. It carries out the reaction DNA(n) + a 2'-deoxyribonucleoside 5'-triphosphate = DNA(n+1) + diphosphate. Its function is as follows. DNA polymerase specifically involved in DNA repair. Plays an important role in translesion synthesis, where the normal high-fidelity DNA polymerases cannot proceed and DNA synthesis stalls. Depending on the context, it inserts the correct base, but causes frequent base transitions, transversions and frameshifts. Lacks 3'-5' proofreading exonuclease activity. Forms a Schiff base with 5'-deoxyribose phosphate at abasic sites, but does not have lyase activity. The polypeptide is DNA polymerase kappa (POLK) (Homo sapiens (Human)).